The primary structure comprises 198 residues: Na(+)-translocating NADH-quinone reductase subunit E (198 aa).

Transmembrane regions (helical) follow at residues Ser-11–Val-31, Phe-39–Val-59, Phe-77–Val-97, Gly-110–Val-130, Ile-140–Ile-160, and Leu-176–Val-196.

It belongs to the NqrDE/RnfAE family. As to quaternary structure, composed of six subunits; NqrA, NqrB, NqrC, NqrD, NqrE and NqrF.

The protein resides in the cell inner membrane. It carries out the reaction a ubiquinone + n Na(+)(in) + NADH + H(+) = a ubiquinol + n Na(+)(out) + NAD(+). Functionally, NQR complex catalyzes the reduction of ubiquinone-1 to ubiquinol by two successive reactions, coupled with the transport of Na(+) ions from the cytoplasm to the periplasm. NqrA to NqrE are probably involved in the second step, the conversion of ubisemiquinone to ubiquinol. The polypeptide is Na(+)-translocating NADH-quinone reductase subunit E (Vibrio campbellii (strain ATCC BAA-1116)).